The following is a 288-amino-acid chain: Protoheme IX farnesyltransferase 2 (288 aa).

Helical transmembrane passes span 8 to 28 (ITKP…FFLA), 36 to 56 (LMLF…GCVV), 85 to 105 (VAFV…FQLV), 108 to 128 (LSAV…TMWY), 131 to 151 (NSVY…LVGY), 152 to 172 (LAVT…FCLW), 211 to 231 (AYVV…EAGY), 233 to 252 (YLAV…FRSI), and 267 to 287 (VSLL…IPLA).

Belongs to the UbiA prenyltransferase family. Protoheme IX farnesyltransferase subfamily.

It localises to the cell inner membrane. It catalyses the reaction heme b + (2E,6E)-farnesyl diphosphate + H2O = Fe(II)-heme o + diphosphate. It participates in porphyrin-containing compound metabolism; heme O biosynthesis; heme O from protoheme: step 1/1. In terms of biological role, converts heme B (protoheme IX) to heme O by substitution of the vinyl group on carbon 2 of heme B porphyrin ring with a hydroxyethyl farnesyl side group. The polypeptide is Protoheme IX farnesyltransferase 2 (Vibrio parahaemolyticus serotype O3:K6 (strain RIMD 2210633)).